Reading from the N-terminus, the 492-residue chain is Catalase (492 aa).

Active-site residues include His-65 and Asn-138. Tyr-348 lines the heme pocket.

Belongs to the catalase family. Homotetramer. Heme serves as cofactor. As to expression, in stems, leaves, roots and developing fruits.

The protein resides in the cytoplasm. It localises to the cytosol. Its subcellular location is the peroxisome matrix. It catalyses the reaction 2 H2O2 = O2 + 2 H2O. Catalyzes the degradation of hydrogen peroxide (H(2)O(2)) generated by peroxisomal oxidases to water and oxygen, thereby protecting cells from the toxic effects of hydrogen peroxide. The sequence is that of Catalase (CAT) from Capsicum annuum (Capsicum pepper).